We begin with the raw amino-acid sequence, 918 residues long: Serine/threonine-protein kinase D1 (918 aa).

A Phosphotyrosine modification is found at Tyr-93. The Phorbol-ester/DAG-type 1 zinc finger occupies 144 to 194 (PHALFVHSYRAPAFCDHCGEMLWGLVRQGLKCEGCGLNYHKRCAFKIPNNC). A phosphoserine mark is found at Ser-203, Ser-206, Ser-217, and Ser-221. The Phorbol-ester/DAG-type 2 zinc-finger motif lies at 276–326 (PHTFVIHSYTRPTVCQFCKKLLKGLFRQGLQCKDCRFNCHKRCAPKVPNNC). Disordered stretches follow at residues 338–362 (SPGA…NSGL) and 380–408 (EGQS…STSN). 2 stretches are compositionally biased toward acidic residues: residues 345-355 (VVMEEGSDDND) and 387-396 (EMQDPDADQE). Ser-351 bears the Phosphoserine mark. Ser-403 and Ser-407 each carry phosphoserine; by MAPK13. The PH domain maps to 428-547 (TVMKEGWMVH…WEVAIQHALM (120 aa)). Tyr-438 bears the Phosphotyrosine mark. Phosphoserine is present on Ser-454. Tyr-469 bears the Phosphotyrosine; by ABL mark. The residue at position 508 (Tyr-508) is a Phosphotyrosine. Ser-554 is subject to Phosphoserine. In terms of domain architecture, Protein kinase spans 589-845 (IFPDEVLGSG…VDKTLSHPWL (257 aa)). ATP is bound by residues 595-603 (LGSGQFGIV) and Lys-618. Asp-712 functions as the Proton acceptor in the catalytic mechanism. The residue at position 744 (Ser-744) is a Phosphoserine; by PKC/PRKCD. At Ser-748 the chain carries Phosphoserine; by autocatalysis and PKC/PRKCD. At Tyr-755 the chain carries Phosphotyrosine. Ser-916 carries the post-translational modification Phosphoserine; by autocatalysis.

This sequence belongs to the protein kinase superfamily. CAMK Ser/Thr protein kinase family. PKD subfamily. Interacts (via N-terminus) with ADAP1/CENTA1. Interacts with MAPK13. Interacts with DAPK1 in an oxidative stress-regulated manner. Interacts with USP28; the interaction induces phosphorylation of USP28 and activated KRAS-mediated stabilization of ZNF304. Interacts with AKAP13 (via C-terminal domain). It depends on Mg(2+) as a cofactor. In terms of processing, phosphorylated at Ser-403 and Ser-407 by MAPK13 during regulation of insulin secretion in pancreatic beta cells. Phosphorylated by DAPK1. Phosphorylated at Tyr-93 and by ABL at Tyr-469, which primes the kinase in response to oxidative stress, and promotes a second step activating phosphorylation at Ser-744/Ser-748 by PKRD. Phosphorylated on Ser-916 upon S.enterica infection in macrophages.

Its subcellular location is the cytoplasm. The protein resides in the cell membrane. It localises to the golgi apparatus. It is found in the trans-Golgi network. It catalyses the reaction L-seryl-[protein] + ATP = O-phospho-L-seryl-[protein] + ADP + H(+). It carries out the reaction L-threonyl-[protein] + ATP = O-phospho-L-threonyl-[protein] + ADP + H(+). With respect to regulation, activated by DAG and phorbol esters. Phorbol-ester/DAG-type domain 1 binds DAG with high affinity and appears to play the dominant role in mediating translocation to the cell membrane and trans-Golgi network. Phorbol-ester/DAG-type domain 2 binds phorbol ester with higher affinity. Autophosphorylation of Ser-748 and phosphorylation of Ser-744 by PKC relieves auto-inhibition by the PH domain. Phosphorylation on Tyr-469 by the SRC-ABL1 pathway in response to oxidative stress, is also required for activation. Activated by DAPK1 under oxidative stress. Its function is as follows. Serine/threonine-protein kinase that converts transient diacylglycerol (DAG) signals into prolonged physiological effects downstream of PKC, and is involved in the regulation of MAPK8/JNK1 and Ras signaling, Golgi membrane integrity and trafficking, cell survival through NF-kappa-B activation, cell migration, cell differentiation by mediating HDAC7 nuclear export, cell proliferation via MAPK1/3 (ERK1/2) signaling, and plays a role in cardiac hypertrophy, VEGFA-induced angiogenesis, genotoxic-induced apoptosis and flagellin-stimulated inflammatory response. Phosphorylates the epidermal growth factor receptor (EGFR) on dual threonine residues, which leads to the suppression of epidermal growth factor (EGF)-induced MAPK8/JNK1 activation and subsequent JUN phosphorylation. Phosphorylates RIN1, inducing RIN1 binding to 14-3-3 proteins YWHAB, YWHAE and YWHAZ and increased competition with RAF1 for binding to GTP-bound form of Ras proteins (NRAS, HRAS and KRAS). Acts downstream of the heterotrimeric G-protein beta/gamma-subunit complex to maintain the structural integrity of the Golgi membranes, and is required for protein transport along the secretory pathway. In the trans-Golgi network (TGN), regulates the fission of transport vesicles that are on their way to the plasma membrane. May act by activating the lipid kinase phosphatidylinositol 4-kinase beta (PI4KB) at the TGN for the local synthesis of phosphorylated inositol lipids, which induces a sequential production of DAG, phosphatidic acid (PA) and lyso-PA (LPA) that are necessary for membrane fission and generation of specific transport carriers to the cell surface. Under oxidative stress, is phosphorylated at Tyr-469 via SRC-ABL1 and contributes to cell survival by activating IKK complex and subsequent nuclear translocation and activation of NFKB1. Involved in cell migration by regulating integrin alpha-5/beta-3 recycling and promoting its recruitment in newly forming focal adhesion. In osteoblast differentiation, mediates the bone morphogenetic protein 2 (BMP2)-induced nuclear export of HDAC7, which results in the inhibition of HDAC7 transcriptional repression of RUNX2. In neurons, plays an important role in neuronal polarity by regulating the biogenesis of TGN-derived dendritic vesicles, and is involved in the maintenance of dendritic arborization and Golgi structure in hippocampal cells. May potentiate mitogenesis induced by the neuropeptide bombesin or vasopressin by mediating an increase in the duration of MAPK1/3 (ERK1/2) signaling, which leads to accumulation of immediate-early gene products including FOS that stimulate cell cycle progression. Plays an important role in the proliferative response induced by low calcium in keratinocytes, through sustained activation of MAPK1/3 (ERK1/2) pathway. Downstream of novel PKC signaling, plays a role in cardiac hypertrophy by phosphorylating HDAC5, which in turn triggers XPO1/CRM1-dependent nuclear export of HDAC5, MEF2A transcriptional activation and induction of downstream target genes that promote myocyte hypertrophy and pathological cardiac remodeling. Mediates cardiac troponin I (TNNI3) phosphorylation at the PKA sites, which results in reduced myofilament calcium sensitivity, and accelerated crossbridge cycling kinetics. The PRKD1-HDAC5 pathway is also involved in angiogenesis by mediating VEGFA-induced specific subset of gene expression, cell migration, and tube formation. In response to VEGFA, is necessary and required for HDAC7 phosphorylation which induces HDAC7 nuclear export and endothelial cell proliferation and migration. During apoptosis induced by cytarabine and other genotoxic agents, PRKD1 is cleaved by caspase-3 at Asp-378, resulting in activation of its kinase function and increased sensitivity of cells to the cytotoxic effects of genotoxic agents. In epithelial cells, is required for transducing flagellin-stimulated inflammatory responses by binding and phosphorylating TLR5, which contributes to MAPK14/p38 activation and production of inflammatory cytokines. Acts as an activator of NLRP3 inflammasome assembly by mediating phosphorylation of NLRP3. May play a role in inflammatory response by mediating activation of NF-kappa-B. May be involved in pain transmission by directly modulating TRPV1 receptor. Plays a role in activated KRAS-mediated stabilization of ZNF304 in colorectal cancer (CRC) cells. Regulates nuclear translocation of transcription factor TFEB in macrophages upon live S.enterica infection. The protein is Serine/threonine-protein kinase D1 (Prkd1) of Rattus norvegicus (Rat).